An 861-amino-acid polypeptide reads, in one-letter code: Glucans biosynthesis glucosyltransferase H (861 aa).

Disordered stretches follow at residues 65–89 (RLSA…SVGR) and 101–129 (AGEP…SMVP). Basic and acidic residues-rich tracts occupy residues 67–76 (SAREPAKGET) and 105–114 (LLKRRPDGTV). A run of 6 helical transmembrane segments spans residues 181 to 201 (FLLG…TKVL), 208 to 228 (LLEI…SAGF), 532 to 552 (VFLT…FLLL), 589 to 609 (LFSA…LLLV), 616 to 636 (GGLP…ALLA), and 698 to 718 (FVLW…LSVM).

Belongs to the glycosyltransferase 2 family. OpgH subfamily.

It is found in the cell inner membrane. It functions in the pathway glycan metabolism; osmoregulated periplasmic glucan (OPG) biosynthesis. Functionally, involved in the biosynthesis of osmoregulated periplasmic glucans (OPGs). The protein is Glucans biosynthesis glucosyltransferase H of Cupriavidus pinatubonensis (strain JMP 134 / LMG 1197) (Cupriavidus necator (strain JMP 134)).